A 219-amino-acid chain; its full sequence is ATP-dependent dethiobiotin synthetase BioD (219 aa).

12–17 (EVGKTY) contacts ATP. Position 16 (Thr-16) interacts with Mg(2+). Lys-37 is a catalytic residue. Ser-41 serves as a coordination point for substrate. ATP contacts are provided by residues Asp-52, 114 to 117 (EGAG), and 174 to 175 (NC). Residues Asp-52 and Glu-114 each coordinate Mg(2+).

Belongs to the dethiobiotin synthetase family. In terms of assembly, homodimer. Requires Mg(2+) as cofactor.

It localises to the cytoplasm. The enzyme catalyses (7R,8S)-7,8-diammoniononanoate + CO2 + ATP = (4R,5S)-dethiobiotin + ADP + phosphate + 3 H(+). It functions in the pathway cofactor biosynthesis; biotin biosynthesis; biotin from 7,8-diaminononanoate: step 1/2. Functionally, catalyzes a mechanistically unusual reaction, the ATP-dependent insertion of CO2 between the N7 and N8 nitrogen atoms of 7,8-diaminopelargonic acid (DAPA, also called 7,8-diammoniononanoate) to form a ureido ring. The chain is ATP-dependent dethiobiotin synthetase BioD from Francisella tularensis subsp. holarctica (strain FTNF002-00 / FTA).